Reading from the N-terminus, the 429-residue chain is MNFSESERLQQLSNEYILGGVNSPSRSYKAVGGGAPVVMKEGHGAYLYDVDGNKFIDYLQAYGPIITGHAHPHITKAIQEQAAKGVLFGTPTELEIEFSKKLRDAIPSLEKIRFVNSGTEAVMTTIRVARAYTKRNKIIKFAGSYHGHSDLVLVAAGSGPSQLGSPDSAGVPESVAREVITVPFNDINAYKEAIEFWGDEIAAVLVEPIVGNFGMVMPQPGFLEEVNEISHSNGTLVIYDEVITAFRFHYGAAQDLLGVIPDLTAFGKIVGGGLPIGGYGGRQDIMEQVAPLGPAYQAGTMAGNPLSMKAGIALLEVLEQDGVYEKLDSLGQQLEEGLLKLIEKHNITATINRIYGSLTLYFTDEKVTHYDQVEHSDGEAFGKFFKLMLNQGINLAPSKFEAWFLTTEHTEEDIKQTLKAADYAFSQMK.

Lys-268 is modified (N6-(pyridoxal phosphate)lysine).

It belongs to the class-III pyridoxal-phosphate-dependent aminotransferase family. HemL subfamily. In terms of assembly, homodimer. Requires pyridoxal 5'-phosphate as cofactor.

The protein localises to the cytoplasm. The catalysed reaction is (S)-4-amino-5-oxopentanoate = 5-aminolevulinate. It participates in porphyrin-containing compound metabolism; protoporphyrin-IX biosynthesis; 5-aminolevulinate from L-glutamyl-tRNA(Glu): step 2/2. The chain is Glutamate-1-semialdehyde 2,1-aminomutase 2 from Staphylococcus aureus (strain MRSA252).